A 405-amino-acid polypeptide reads, in one-letter code: Phosphatidylinositol 5-phosphate 4-kinase type-2 alpha (405 aa).

One can recognise a PIPK domain in the interval 32–404 (ASDPLLSVLM…RFLDFIANIL (373 aa)). Positions 287–326 (QEEVECEENDGEDEGESDGTHPIGTPPDSPGNTLNSSLPL) are disordered. Acidic residues predominate over residues 288-303 (EEVECEENDGEDEGES).

Homodimer. In terms of processing, phosphorylated in tyrosines. Phosphorylation is induced by light and increases kinase activity.

The protein resides in the cell membrane. The protein localises to the nucleus. It is found in the lysosome. It localises to the cytoplasm. The enzyme catalyses a 1,2-diacyl-sn-glycero-3-phospho-(1D-myo-inositol-5-phosphate) + ATP = a 1,2-diacyl-sn-glycero-3-phospho-(1D-myo-inositol-4,5-bisphosphate) + ADP + H(+). It carries out the reaction 1,2-dihexadecanoyl-sn-glycero-3-phospho-(1D-myo-inositol-5-phosphate) + ATP = 1,2-dihexadecanoyl-sn-glycero-3-phospho-(1D-myo-inositol-4,5-bisphosphate) + ADP + H(+). It catalyses the reaction 1,2-dihexadecanoyl-sn-glycero-3-phospho-(1D-myo-inositol-5-phosphate) + GTP = 1,2-dihexadecanoyl-sn-glycero-3-phospho-(1D-myo-inositol-4,5-bisphosphate) + GDP + H(+). Its activity is regulated as follows. In rod outer segments, activated by light. Catalyzes the phosphorylation of phosphatidylinositol 5-phosphate (PtdIns5P) on the fourth hydroxyl of the myo-inositol ring, to form phosphatidylinositol 4,5-bisphosphate (PtdIns(4,5)P2). Has both ATP- and GTP-dependent kinase activities. The protein is Phosphatidylinositol 5-phosphate 4-kinase type-2 alpha (PIP4K2A) of Gallus gallus (Chicken).